Consider the following 202-residue polypeptide: LexA repressor (202 aa).

Positions R32–R52 form a DNA-binding region, H-T-H motif. Catalysis depends on for autocatalytic cleavage activity residues S121 and K158.

Belongs to the peptidase S24 family. As to quaternary structure, homodimer.

It catalyses the reaction Hydrolysis of Ala-|-Gly bond in repressor LexA.. Functionally, represses a number of genes involved in the response to DNA damage (SOS response), including recA and lexA. In the presence of single-stranded DNA, RecA interacts with LexA causing an autocatalytic cleavage which disrupts the DNA-binding part of LexA, leading to derepression of the SOS regulon and eventually DNA repair. The polypeptide is LexA repressor (Azoarcus sp. (strain BH72)).